Here is a 433-residue protein sequence, read N- to C-terminus: Tol-Pal system protein TolB (433 aa).

The first 21 residues, 1-21 (MINLFRGLLVVLCFASAMVAA), serve as a signal peptide directing secretion.

The protein belongs to the TolB family. The Tol-Pal system is composed of five core proteins: the inner membrane proteins TolA, TolQ and TolR, the periplasmic protein TolB and the outer membrane protein Pal. They form a network linking the inner and outer membranes and the peptidoglycan layer.

The protein resides in the periplasm. Functionally, part of the Tol-Pal system, which plays a role in outer membrane invagination during cell division and is important for maintaining outer membrane integrity. In Pseudomonas syringae pv. tomato (strain ATCC BAA-871 / DC3000), this protein is Tol-Pal system protein TolB.